Reading from the N-terminus, the 143-residue chain is Large ribosomal subunit protein uL11 (143 aa).

This sequence belongs to the universal ribosomal protein uL11 family. As to quaternary structure, part of the ribosomal stalk of the 50S ribosomal subunit. Interacts with L10 and the large rRNA to form the base of the stalk. L10 forms an elongated spine to which L12 dimers bind in a sequential fashion forming a multimeric L10(L12)X complex. Post-translationally, one or more lysine residues are methylated.

In terms of biological role, forms part of the ribosomal stalk which helps the ribosome interact with GTP-bound translation factors. This Cupriavidus metallidurans (strain ATCC 43123 / DSM 2839 / NBRC 102507 / CH34) (Ralstonia metallidurans) protein is Large ribosomal subunit protein uL11.